We begin with the raw amino-acid sequence, 878 residues long: Aminopeptidase M1-C (878 aa).

Residues 102 to 209 (LGEGVLAMDF…MSTYLVAIVV (108 aa)) are required for membrane association. Substrate-binding positions include E142 and 275–279 (GAMEN). Residue H311 participates in Zn(2+) binding. E312 functions as the Proton acceptor in the catalytic mechanism. Zn(2+)-binding residues include H315 and E334. Residues 726–727 (LL) carry the Dileucine internalization motif motif.

It belongs to the peptidase M1 family. In terms of assembly, homodimer. Requires Zn(2+) as cofactor.

It localises to the membrane. It is found in the microsome membrane. The protein localises to the cytoplasm. The enzyme catalyses Release of an N-terminal amino acid, Xaa-|-Yaa- from a peptide, amide or arylamide. Xaa is preferably Ala, but may be most amino acids including Pro (slow action). When a terminal hydrophobic residue is followed by a prolyl residue, the two may be released as an intact Xaa-Pro dipeptide.. This chain is Aminopeptidase M1-C, found in Oryza sativa subsp. japonica (Rice).